The sequence spans 390 residues: uncharacterized protein (390 aa).

11 helical membrane passes run 7-27 (IYIL…ISGI), 35-55 (LGIT…VYAL), 77-97 (LGLF…GWFI), 101-121 (IIMA…AAKI), 128-148 (GSAI…GVPL), 161-181 (VFGA…FTLP), 203-223 (VAMG…AYTY), 238-258 (LLSG…KFGG), 281-301 (LILL…LILW), 335-355 (MQFA…NVSL), and 357-377 (SITW…LLIF).

This sequence belongs to the major facilitator superfamily.

It is found in the cell membrane. This is an uncharacterized protein from Bacillus subtilis (strain 168).